The chain runs to 244 residues: Cobalt transport protein CbiM (244 aa).

The N-terminal stretch at 1–28 (MKKLWKFIPFVLMGVIYFTLTNPESAHA) is a signal peptide. A run of 6 helical transmembrane segments spans residues 37-57 (PVKWAVFWLIVFIPFLVLGLI), 71-91 (LLLALCAAFIFVLSALKIPSV), 103-123 (LATVMFGPLVVSVLGVIVLLF), 135-155 (TLGANAMSMAVIGPMVGFVVY), 166-186 (SVSIFLCAMTADLATYFTTSV), and 206-226 (FMAIFCVTQVPIAIAEGLLTV).

This sequence belongs to the CbiM family. Forms an energy-coupling factor (ECF) transporter complex composed of an ATP-binding protein (A component, CbiO), a transmembrane protein (T component, CbiQ) and 2 possible substrate-capture proteins (S components, CbiM and CbiN) of unknown stoichimetry.

The protein localises to the cell membrane. It participates in cofactor biosynthesis; adenosylcobalamin biosynthesis. Its function is as follows. Part of the energy-coupling factor (ECF) transporter complex CbiMNOQ involved in cobalt import. The chain is Cobalt transport protein CbiM from Listeria seeligeri serovar 1/2b (strain ATCC 35967 / DSM 20751 / CCM 3970 / CCUG 15530 / CIP 100100 / LMG 11386 / NCTC 11856 / SLCC 3954 / 1120).